The sequence spans 172 residues: Shikimate kinase (172 aa).

11-16 (GAGKST) provides a ligand contact to ATP. Mg(2+) is bound at residue serine 15. Positions 33, 57, and 79 each coordinate substrate. Arginine 117 provides a ligand contact to ATP. Substrate is bound at residue arginine 136. Arginine 153 contacts ATP.

This sequence belongs to the shikimate kinase family. As to quaternary structure, monomer. Requires Mg(2+) as cofactor.

It localises to the cytoplasm. It carries out the reaction shikimate + ATP = 3-phosphoshikimate + ADP + H(+). It functions in the pathway metabolic intermediate biosynthesis; chorismate biosynthesis; chorismate from D-erythrose 4-phosphate and phosphoenolpyruvate: step 5/7. Its function is as follows. Catalyzes the specific phosphorylation of the 3-hydroxyl group of shikimic acid using ATP as a cosubstrate. The polypeptide is Shikimate kinase (Pseudomonas aeruginosa (strain LESB58)).